The sequence spans 198 residues: Pyridoxal 5'-phosphate synthase subunit PdxT (198 aa).

Residue 50-52 (GES) coordinates L-glutamine. Cys-82 acts as the Nucleophile in catalysis. L-glutamine is bound by residues Arg-111 and 140–141 (IR). Active-site charge relay system residues include His-177 and Glu-179.

The protein belongs to the glutaminase PdxT/SNO family. In the presence of PdxS, forms a dodecamer of heterodimers. Only shows activity in the heterodimer.

It catalyses the reaction aldehydo-D-ribose 5-phosphate + D-glyceraldehyde 3-phosphate + L-glutamine = pyridoxal 5'-phosphate + L-glutamate + phosphate + 3 H2O + H(+). The enzyme catalyses L-glutamine + H2O = L-glutamate + NH4(+). The protein operates within cofactor biosynthesis; pyridoxal 5'-phosphate biosynthesis. Catalyzes the hydrolysis of glutamine to glutamate and ammonia as part of the biosynthesis of pyridoxal 5'-phosphate. The resulting ammonia molecule is channeled to the active site of PdxS. The sequence is that of Pyridoxal 5'-phosphate synthase subunit PdxT from Leifsonia xyli subsp. xyli (strain CTCB07).